We begin with the raw amino-acid sequence, 1107 residues long: MGSKGAYRYHWQSHNVKHSGVDDMVLLSKITESSIVENLKKRYMDDYIFTYIGSVLISVNPFKQMPYFGEKEIEMYQGAAQYENPPHIYALADSMYRNMIIDRENQCVIISGESGAGKTVAAKYIMSYVSRVSGGGPKVQHVKDIILQSNPLLEAFGNAKTVRNNNSSRFGKYFEIQFSPGGEPDGGKISNFLLEKSRVVMRNPGERSFHIFYQLIEGASPEQKQSLGITSMDYYYYLSLSGSYKVDDIDDKRDFQETLHAMNVIGIFSEEQTLVLQIVAGILHLGNINFKEVGNYAAVESEEFLAFPAYLLGINQDRLKEKLTSRQMDSKWGGKSESIHVTLNVEQACYTRDALAKALHARVFDFLVDSINKAMEKDHEEYNIGVLDIYGFEIFQKNGFEQFCINFVNEKLQQIFIELTLKAEQEEYVQEGIRWTPIEYFNNKIVCDLIESKVNPPGIMSILDDVCATMHAVGEGADQTLLQKLQMQIGSHEHFNSWNQGFIIHHYAGKVSYDMDGFCERNRDVLFMDLIELMQSSELPFIKSLFPENLQADKKGRPTTAGSKIKKQANDLVSTLMKCTPHYIRCIKPNETKKPKDWEESRVKHQVEYLGLKENIRVRRAGYAYRRVFQKFLQRYAILTKATWPVWRGDEKQGVLHLLQSVNMDSDQFQLGRSKVFIKAPESLFLLEEMRERKYDGYARVIQKTWRKFVARKKYVQMREDASDLLLNKKERRRNSINRNFIGDYIGMEEHPELQQFVGKREKIDFADIVTKYDRRFKGVKRDLLLTPKCLYLIGREKVKQGPDKGLVKEVLKRKIEVERILSVSLSTMQDDIFILHEQEYDSLLESVFKTEFLSLLTKRYEEKTQKQLPLKFSNTLELKLKKENWGPWSAGGSRQVQFYQGFGDLAILKPSNKVLQVSIGPGLPKNARPTRRNTVSSRGYSGGTNNNYPMRAAPAPPGCHRNGLTRNQFVHPPRASGNQRSNQKSLYTSMARPPLPRQQSTGSDRLSQTPESLDFLKVPDQGAAGVRRQTTSRPPPAGGRPKPQPKPKPQVPQCKALYAYDAQDTDELSFNANDVIDIIKEDPSGWWTGRLRGKQGLFPNNYVTKI.

In terms of domain architecture, Myosin motor spans 19-692 (SGVDDMVLLS…SLFLLEEMRE (674 aa)). 112-119 (GESGAGKT) contacts ATP. The segment at 581–591 (PHYIRCIKPNE) is actin-binding. Positions 695–724 (YDGYARVIQKTWRKFVARKKYVQMREDASD) constitute an IQ domain. In terms of domain architecture, TH1 spans 730–922 (KERRRNSINR…NKVLQVSIGP (193 aa)). Positions 920–1052 (IGPGLPKNAR…KPQPKPKPQV (133 aa)) are disordered. 3 stretches are compositionally biased toward polar residues: residues 933–949 (RNTV…NNNY), 977–989 (SGNQ…SLYT), and 998–1012 (RQQS…QTPE). Serine 1001 is modified (phosphoserine). The segment covering 1034–1051 (RPPPAGGRPKPQPKPKPQ) has biased composition (pro residues). The region spanning 1050–1107 (PQVPQCKALYAYDAQDTDELSFNANDVIDIIKEDPSGWWTGRLRGKQGLFPNNYVTKI) is the SH3 domain.

Belongs to the TRAFAC class myosin-kinesin ATPase superfamily. Myosin family. Interacts with CALM and F-actin. Interacts (via SH3 domain) with SYNJ1, DNM1 and DNM2. Interacts with ARL14EP. Interacts with CARMIL1. In terms of tissue distribution, detected in brain stem, brain cortex, cerebellum, stomach, colon, heart, lung, liver, spleen and kidney. Detected in utricle, cochlea, outer hair cell bundle cuticular plate and vestibular epithelia (at protein level). Detected in cochlea and vestibular tissues. Detected in kidney, lung, spleen and intestine.

The protein localises to the cytoplasm. It is found in the cytoskeleton. Its subcellular location is the cytoplasmic vesicle. It localises to the clathrin-coated vesicle. The protein resides in the cell junction. Its function is as follows. Myosins are actin-based motor molecules with ATPase activity. Unconventional myosins serve in intracellular movements. Their highly divergent tails bind to membranous compartments, which are then moved relative to actin filaments. Binds to membranes containing anionic phospholipids via its tail domain. Involved in clathrin-mediated endocytosis and intracellular movement of clathrin-coated vesicles. Required for normal morphology of the glomerular basement membrane, normal development of foot processes by kidney podocytes and normal kidney function. In dendritic cells, may control the movement of class II-containing cytoplasmic vesicles along the actin cytoskeleton by connecting them with the actin network via ARL14EP and ARL14. The polypeptide is Unconventional myosin-Ie (Myo1e) (Rattus norvegicus (Rat)).